The primary structure comprises 232 residues: MSNVDHAEIAKFEALAHRWWDRESEFKPLHDINPLRVNWIDERAGLAGKTVLDVGCGGGILSEAMAQRGASVTGIDMGEAPLAVARLHQLESGVAVDYRQITAEQMAEEMPGQFDVVTCLEMLEHVPDPASVIRACHRLVKPGGQVFLSTINRNPKAYLFAVIGAEYILQLLPRGTHDFRKFIRPSELGAWSRDAGLEVKDIIGLTYNPLTKHYKLANDVDVNYMVQTQREA.

4 residues coordinate S-adenosyl-L-methionine: Arg36, Gly55, Asp76, and Leu120.

Belongs to the methyltransferase superfamily. UbiG/COQ3 family.

The catalysed reaction is a 3-demethylubiquinol + S-adenosyl-L-methionine = a ubiquinol + S-adenosyl-L-homocysteine + H(+). The enzyme catalyses a 3-(all-trans-polyprenyl)benzene-1,2-diol + S-adenosyl-L-methionine = a 2-methoxy-6-(all-trans-polyprenyl)phenol + S-adenosyl-L-homocysteine + H(+). Its pathway is cofactor biosynthesis; ubiquinone biosynthesis. O-methyltransferase that catalyzes the 2 O-methylation steps in the ubiquinone biosynthetic pathway. The protein is Ubiquinone biosynthesis O-methyltransferase of Pseudomonas paraeruginosa (strain DSM 24068 / PA7) (Pseudomonas aeruginosa (strain PA7)).